We begin with the raw amino-acid sequence, 404 residues long: Argininosuccinate synthase (404 aa).

9–17 (AYSGGLDTS) contacts ATP. Residue Tyr86 participates in L-citrulline binding. Gly116 contacts ATP. Thr118, Asn122, and Asp123 together coordinate L-aspartate. Asn122 contacts L-citrulline. The L-citrulline site is built by Arg126, Ser174, Ser183, Glu259, and Tyr271.

It belongs to the argininosuccinate synthase family. Type 1 subfamily. Homotetramer.

It is found in the cytoplasm. The enzyme catalyses L-citrulline + L-aspartate + ATP = 2-(N(omega)-L-arginino)succinate + AMP + diphosphate + H(+). Its pathway is amino-acid biosynthesis; L-arginine biosynthesis; L-arginine from L-ornithine and carbamoyl phosphate: step 2/3. The sequence is that of Argininosuccinate synthase from Listeria monocytogenes serotype 4b (strain CLIP80459).